Here is a 3033-residue protein sequence, read N- to C-terminus: Genome polyprotein (3033 aa).

Serine 2 is modified (N-acetylserine; by host). Residues 2-23 (STNPKPQRKTKRNTNRRPQDVK) form an interaction with STAT1 region. Positions 2 to 58 (STNPKPQRKTKRNTNRRPQDVKFPGGGQIVGGVYLLPRRGPRLGVRATRKTSERSQP) are interaction with EIF2AK2/PKR. The tract at residues 2–59 (STNPKPQRKTKRNTNRRPQDVKFPGGGQIVGGVYLLPRRGPRLGVRATRKTSERSQPR) is interaction with DDX3X. The interval 2-75 (STNPKPQRKT…PKDRRSTGKS (74 aa)) is disordered. Topologically, residues 2 to 168 (STNPKPQRKT…EDGVNFATGN (167 aa)) are cytoplasmic. Short sequence motifs (nuclear localization signal) lie at residues 5–13 (PKPQRKTKR) and 38–43 (PRRGPR). Positions 7 to 16 (PQRKTKRNTN) are enriched in basic residues. The segment covering 32–47 (GGVYLLPRRGPRLGVR) has biased composition (low complexity). Phosphoserine; by host is present on serine 53. 2 consecutive short sequence motifs (nuclear localization signal) follow at residues 58-64 (PRGRRQP) and 66-71 (PKDRRS). The residue at position 99 (serine 99) is a Phosphoserine; by host. The important for endoplasmic reticulum and mitochondrial localization stretch occupies residues 112–152 (PRHRSRNVGKVIDTLTCGFADLMGYIPVVGAPLGGVARALA). Position 116 is a phosphoserine; by host PKA (serine 116). Residues 122 to 173 (VIDTLTCGFADLMGYIPVVGAPLGGVARALAHGVRVLEDGVNFATGNLPGCS) form an interaction with APOA2 region. Residues 164–167 (FATG) are important for lipid droplets localization. A helical transmembrane segment spans residues 169–189 (LPGCSFSIFLLALLSCITTPV). The propeptide at 178–191 (LLALLSCITTPVSA) is ER anchor for the core protein, removed in mature form by host signal peptidase. The Lumenal segment spans residues 190 to 358 (SAAEVKNIST…GGAHWGVMFG (169 aa)). Residues asparagine 196, asparagine 209, and asparagine 234 are each glycosylated (N-linked (GlcNAc...) asparagine; by host). An important for fusion region spans residues 265-296 (VVMSATLCSALYVGDLCGGVMLAAQMFIVSPQ). Asparagine 305 carries an N-linked (GlcNAc...) asparagine; by host glycan. Residues 359 to 379 (LAYFSMQGAWAKVVVILLLAA) traverse the membrane as a helical segment. The Lumenal segment spans residues 380-729 (GVDAQTHTVG…WEWVVLLFLL (350 aa)). The tract at residues 385–411 (THTVGGSTAHNARTLTGMFSLGARQKI) is HVR1. Asparagine 417, asparagine 423, asparagine 430, and asparagine 448 each carry an N-linked (GlcNAc...) (high mannose) asparagine; by host glycan. 4 disulfides stabilise this stretch: cysteine 429-cysteine 554, cysteine 452-cysteine 459, cysteine 488-cysteine 496, and cysteine 505-cysteine 510. N-linked (GlcNAc...) (high mannose) asparagine; by host glycosylation is present at asparagine 477. The tract at residues 484–496 (MRPYCWHYPPRQC) is CD81-binding 1. The interval 524–555 (LGAPTYTWGENETDVFLLNSTRPPQGSWFGCT) is CD81-binding 2. N-linked (GlcNAc...) (high mannose) asparagine; by host glycosylation is found at asparagine 534, asparagine 542, and asparagine 558. Cysteine 566 and cysteine 571 are joined by a disulfide. A glycan (N-linked (GlcNAc...) (high mannose) asparagine; by host) is linked at asparagine 578. Disulfide bonds link cysteine 585-cysteine 589, cysteine 601-cysteine 624, and cysteine 611-cysteine 648. 2 N-linked (GlcNAc...) (high mannose) asparagine; by host glycosylation sites follow: asparagine 627 and asparagine 649. A disulfide bridge connects residues cysteine 656 and cysteine 681. An EIF2AK2/eIF2-alpha phosphorylation homology domain (PePHD) region spans residues 664-675 (SQLSPLLHSTTE). The chain crosses the membrane as a helical span at residues 730–750 (LADARVCACLWMLILLGQAEA). Over 751-761 (ALEKLVVLHAA) the chain is Lumenal. A helical membrane pass occupies residues 762-782 (SAASCNGFLYFVIFFVAAWYI). The Cytoplasmic portion of the chain corresponds to 783-786 (KGRV). Residues 787–807 (VPLATYSLTGLWSFGLLLLAL) form a helical membrane-spanning segment. Over 808–817 (PQQAYAYDAS) the chain is Lumenal. A helical membrane pass occupies residues 818-838 (VHGQIGAALLVLITLFTLTPG). Topologically, residues 839-885 (YKTLLSRFLWWLCYLLTLAEAMVQEWAPPMQVRGGRDGIIWAVAIFC) are cytoplasmic. Residues 886–906 (PGVVFDITKWLLAVLGPAYLL) form a helical membrane-spanning segment. Over 907-932 (KGALTRVPYFVRAHALLRMCTMVRHL) the chain is Lumenal. Residues 907–1030 (KGALTRVPYF…GYTSKGWSLL (124 aa)) enclose the Peptidase C18 domain. Positions 908-1210 (GALTRVPYFV…PVETLDIVTR (303 aa)) are protease NS2-3. Residue cysteine 926 is the site of S-palmitoyl cysteine; by host attachment. Residues 933 to 953 (AGGRYVQMVLLALGRWTGTYI) form a helical membrane-spanning segment. The tract at residues 933 to 953 (AGGRYVQMVLLALGRWTGTYI) is interaction with host SCPS1. The Cytoplasmic segment spans residues 954–1661 (YDHLTPMSDW…CMQADLEVMT (708 aa)). Active-site for protease NS2 activity; shared with dimeric partner residues include histidine 956, glutamate 976, and cysteine 997. Positions 1031–1212 (APITAYAQQT…ETLDIVTRSP (182 aa)) constitute a Peptidase S29 domain. Residues histidine 1087 and aspartate 1111 each act as charge relay system; for serine protease NS3 activity in the active site. Residues cysteine 1127 and cysteine 1129 each coordinate Zn(2+). Serine 1169 (charge relay system; for serine protease NS3 activity) is an active-site residue. 2 residues coordinate Zn(2+): cysteine 1175 and histidine 1179. One can recognise a Helicase ATP-binding domain in the interval 1221 to 1373 (PAVPQTYQVG…PNIEEVALGQ (153 aa)). 1234 to 1241 (APTGSGKS) contacts ATP. Mg(2+) contacts are provided by serine 1241 and glutamate 1321. Positions 1320-1323 (DECH) match the DECH box motif. Positions 1490–1501 (QRRGRTGRGRLG) are RNA-binding. Residues 1662-1682 (STWVLAGGVLAAVAAYCLATG) form a helical membrane-spanning segment. The NS3-binding stretch occupies residues 1683-1694 (CVCIIGRLHVNQ). The Cytoplasmic segment spans residues 1683 to 1809 (CVCIIGRLHV…ALTSPLSTST (127 aa)). The chain crosses the membrane as a helical span at residues 1810–1830 (TILLNILGGWLASQIAPPAGA). The Lumenal segment spans residues 1831–1832 (TG). A helical transmembrane segment spans residues 1833–1853 (FVVSGLVGAAVGSIGLGKVLV). Residues 1837 to 1865 (GLVGAAVGSIGLGKVLVDILAGYGAGISG) are glycine zipper. A topological domain (cytoplasmic) is located at residue aspartate 1854. A helical membrane pass occupies residues 1855-1875 (ILAGYGAGISGALVAFKIMSG). The Lumenal portion of the chain corresponds to 1876-1885 (EKPSMEDVVN). A helical membrane pass occupies residues 1886 to 1906 (LLPGILSPGALVVGVICAAIL). Residues 1907-1976 (RRHVGPGEGA…WITEDCPIPC (70 aa)) are Cytoplasmic-facing. Cysteine 1972 carries the S-palmitoyl cysteine; by host lipid modification. Cysteine 1976 carries S-palmitoyl cysteine; by host; partial lipidation. An intramembrane segment occupies 1977–2007 (SGSWLRDVWDWVCTILTDFKNWLTSKLFPKM). Residues 1982–2002 (RDVWDWVCTILTDFKNWLTSK) are membrane-binding. Over 2008–3012 (PGLPFISCQK…YHSVSRARPR (1005 aa)) the chain is Cytoplasmic. The RNA-binding stretch occupies residues 2009-2225 (GLPFISCQKG…RATCTTHGKA (217 aa)). Zn(2+) contacts are provided by cysteine 2015, cysteine 2033, cysteine 2035, and cysteine 2056. Tyrosine 2069 is subject to Phosphotyrosine; by host. Residues 2124–2212 (EFFSWVDGVQ…ASSSASQLSA (89 aa)) form an FKBP8-binding region. The interval 2124–2332 (EFFSWVDGVQ…PTPPPRRRRT (209 aa)) is transcriptional activation. The segment at 2139–2143 (PIPKP) is interaction with non-structural protein 4A. Disordered stretches follow at residues 2193-2214 (RLAR…SAPS) and 2309-2335 (ATVA…TVGL). Serine 2198 is modified (phosphoserine; by host; in p56). A compositionally biased stretch (low complexity) spans 2198-2214 (SPPSEASSSASQLSAPS). A Phosphoserine; by host; in p58 modification is found at serine 2201. Serine 2205 bears the Phosphoserine; by host; in p56 and p58, regulates intracellular NS5A distribution mark. A phosphoserine; by host; in p58 mark is found at serine 2208, serine 2211, and serine 2214. The interval 2210 to 2249 (LSAPSLRATCTTHGKAYDVDMVDANLFMGGDVTRIESESK) is ISDR. The tract at residues 2214-2275 (SLRATCTTHG…LEPSIPSEYM (62 aa)) is interaction with EIF2AK2/PKR. The interval 2253–2310 (LDSLDPMVEERSDLEPSIPSEYMLPKKRFPPALPAWARPDYNPPLVESWKRPDYQPAT) is NS4B-binding. Residues 2316–2326 (LPPPKKTPTPP) show a composition bias toward pro residues. Positions 2322-2325 (TPTP) match the SH3-binding motif. Threonine 2324 is modified (phosphothreonine; by host). Residues 2326-2334 (PPRRRRTVG) carry the Nuclear localization signal motif. The segment at 2336-2447 (SESSIADALQ…SVVCCSMSYS (112 aa)) is interaction with host IFI27. Lysine 2350 is covalently cross-linked (Glycyl lysine isopeptide (Lys-Gly) (interchain with G-Cter in ubiquitin)). The interval 2351–2431 (SFGQPPPSGD…PGSGSGSWST (81 aa)) is disordered. The tract at residues 2358 to 2381 (SGDSGLSTGADAADSGSRTPPDEL) is V3. A compositionally biased stretch (acidic residues) spans 2398–2408 (EPGDPDLEPEQ). The span at 2417 to 2431 (GGVVTPGSGSGSWST) shows a compositional bias: low complexity. The 119-residue stretch at 2656 to 2774 (PMGFSYDTRC…ISESQGTEED (119 aa)) folds into the RdRp catalytic domain. Mg(2+) is bound by residues aspartate 2662, aspartate 2760, and aspartate 2761. Residues 3013–3033 (LLLLGLLLLFVGVGLFLLPAR) form a helical membrane-spanning segment.

Belongs to the hepacivirus polyprotein family. In terms of assembly, homooligomer. Interacts with E1 (via C-terminus). Interacts with the non-structural protein 5A. Interacts (via N-terminus) with host STAT1 (via SH2 domain); this interaction results in decreased STAT1 phosphorylation and ubiquitin-mediated proteasome-dependent STAT1 degradation, leading to decreased IFN-stimulated gene transcription. Interacts with host STAT3; this interaction constitutively activates STAT3. Interacts with host LTBR receptor. Interacts with host TNFRSF1A receptor and possibly induces apoptosis. Interacts with host HNRPK. Interacts with host YWHAE. Interacts with host UBE3A/E6AP. Interacts with host DDX3X. Interacts with host APOA2. Interacts with host RXRA protein. Interacts with host SP110 isoform 3/Sp110b; this interaction sequesters the transcriptional corepressor SP110 away from the nucleus. Interacts with host CREB3 nuclear transcription protein; this interaction triggers cell transformation. Interacts with host ACY3. Interacts with host C1QR1. Interacts with host RBM24; this interaction, which enhances the interaction of the mature core protein with 5'-UTR, may inhibit viral translation and favor replication. Interacts with host EIF2AK2/PKR; this interaction induces the autophosphorylation of EIF2AK2. Part of the viral assembly initiation complex composed of NS2, E1, E2, NS3, NS4A, NS5A and the mature core protein. Forms a heterodimer with envelope glycoprotein E2. Interacts with mature core protein. Interacts with protease NS2. The heterodimer E1/E2 interacts with host CLDN1; this interaction plays a role in viral entry into host cell. Interacts with host SPSB2 (via C-terminus). Part of the viral assembly initiation complex composed of NS2, E1, E2, NS3, NS4A, NS5A and the mature core protein. Interacts with host NEURL3; this interaction prevents E1 binding to glycoprotein E2. As to quaternary structure, forms a heterodimer with envelope glycoprotein E1. Interacts with host CD81 and SCARB1 receptors; this interaction may play a role in viral entry into host cell. Interacts with host EIF2AK2/PKR; this interaction inhibits EIF2AK2 and probably allows the virus to evade the innate immune response. Interacts with host CD209/DC-SIGN and CLEC4M/DC-SIGNR. Interact with host SPCS1; this interaction is essential for viral particle assembly. Interacts with protease NS2. The heterodimer E1/E2 interacts with host CLDN1; this interaction plays a role in viral entry into host cell. Part of the viral assembly initiation complex composed of NS2, E1, E2, NS3, NS4A, NS5A and the mature core protein. Interacts with host SLC3A2/4F2hc; the interaction may facilitate viral entry into host cell. Interacts with human PLSCR1. In terms of assembly, homohexamer. Homoheptamer. Interacts with protease NS2. Homodimer. Interacts with host SPCS1; this interaction is essential for viral particle assembly. Interacts with envelope glycoprotein E1. Interacts with envelope glycoprotein E2. Interacts with viroporin p7. Interacts with serine protease/helicase NS3. Part of the replication complex composed of NS2, NS3, NS4A, NS4B, NS5A and the RNA-directed RNA polymerase embedded in an ER-derived membranous web. Part of the viral assembly initiation complex composed of NS2, E1, E2, NS3, NS4A, NS5A and the mature core protein. As to quaternary structure, interacts with protease NS2. Interacts with non-structural protein 4A; this interaction stabilizes the folding of NS3 serine protease. NS3-NS4A interaction is essential for NS3 activation and allows membrane anchorage of the latter. NS3/NS4A complex also prevents phosphorylation of host IRF3, thus preventing the establishment of dsRNA induced antiviral state. Interacts with host MAVS; this interaction leads to the cleavage and inhibition of host MAVS. Interacts with host TICAM1; this interaction leads to the cleavage and inhibition of host TICAM1. Interacts with host TANK-binding kinase/TBK1; this interaction results in the inhibition of the association between TBK1 and IRF3, which leads to the inhibition of IRF3 activation. Interacts with host RBM24. Part of the replication complex composed of NS2, NS3, NS4A, NS4B, NS5A and the RNA-directed RNA polymerase embedded in an ER-derived membranous web. Part of the viral assembly initiation complex composed of NS2, E1, E2, NS3, NS4A, NS5A and the mature core protein. In terms of assembly, interacts with NS3 serine protease; this interaction stabilizes the folding of NS3 serine protease. NS3-NS4A interaction is essential for NS3 activation and allows membrane anchorage of the latter. Interacts with non-structural protein 5A (via N-terminus). Part of the replication complex composed of NS2, NS3, NS4A, NS4B, NS5A and the RNA-directed RNA polymerase embedded in an ER-derived membranous web. Part of the viral assembly initiation complex composed of NS2, E1, E2, NS3, NS4A, NS5A and the mature core protein. Homomultimer. Interacts with non-structural protein NS5A. Interacts with host PLA2G4C; this interaction likely initiates the recruitment of replication complexes to lipid droplets. Interacts with host STING; this interaction disrupts the interaction between STING and TBK1 thereby suppressing the interferon signaling. Part of the replication complex composed of NS2, NS3, NS4A, NS4B, NS5A and the RNA-directed RNA polymerase embedded in an ER-derived membranous web. As to quaternary structure, monomer. Homodimer; dimerization is required for RNA-binding. Interacts with the mature core protein. Interacts (via N-terminus) with non-structural protein 4A. Interacts with non-structural protein 4B. Interacts (via region D2) with RNA-directed RNA polymerase. Part of the viral assembly initiation complex composed of NS2, E1, E2, NS3, NS4A, NS5A and the mature core protein. Part of the replication complex composed of NS2, NS3, NS4A, NS4B, NS5A and the RNA-directed RNA polymerase embedded in an ER-derived membranous web. Interacts with host GRB2. Interacts with host BIN1. Interacts with host PIK3R1. Interacts with host SRCAP. Interacts with host FKBP8. Interacts (via C-terminus) with host VAPB (via MSP domain). Interacts with host EIF2AK2/PKR; this interaction leads to disruption of EIF2AK2 dimerization by NS5A and probably allows the virus to evade the innate immune response. Interacts (via N-terminus) with host PACSIN2 (via N-terminus); this interaction attenuates protein kinase C alpha-mediated phosphorylation of PACSIN2 by disrupting the interaction between PACSIN2 and PRKCA. Interacts (via N-terminus) with host SRC kinase (via SH2 domain). Interacts with most Src-family kinases. Interacts with host IFI27 and SKP2; promotes the ubiquitin-mediated proteasomal degradation of NS5A. Interacts with host GPS2. Interacts with host TNFRSF21; this interaction allows the modulation by the virus of JNK, p38 MAPK, STAT3, and Akt signaling pathways in a DR6-dependent manner. Interacts (via N-terminus) with host CIDEB (via N-terminus); this interaction seems to regulate the association of HCV particles with APOE. Interacts with host CHKA/Choline Kinase-alpha; CHKA bridges host PI4KA and NS5A and potentiates NS5A-stimulated PI4KA activity, which then facilitates the targeting of the ternary complex to the ER for viral replication. Interacts with host SPSB2 (via C-terminus); this interaction targets NS5A for ubiquitination and degradation. Interacts with host RAB18; this interaction may promote the association of NS5A and other replicase components with lipid droplets. Interacts (via region D2) with host PPIA/CYPA; the interaction stimulates RNA-binding ability of NS5A and is dependent on the peptidyl-prolyl cis-trans isomerase activity of PPIA/CYPA. Interacts with host TRIM14; this interaction induces the degradation of NS5A. In terms of assembly, homooligomer. Interacts with non-structural protein 5A. Interacts with host VAPB. Interacts with host PRK2/PKN2. Interacts with host HNRNPA1 and SEPT6; these interactions facilitate viral replication. Part of the replication complex composed of NS2, NS3, NS4A, NS4B, NS5A and the RNA-directed RNA polymerase. Zn(2+) is required as a cofactor. Requires Mg(2+) as cofactor. Specific enzymatic cleavages in vivo yield mature proteins. The structural proteins, core, E1, E2 and p7 are produced by proteolytic processing by host signal peptidases. The core protein precursor is synthesized as a 23 kDa, which is retained in the ER membrane through the hydrophobic signal peptide. Cleavage by the signal peptidase releases the 21 kDa mature core protein. The cleavage of the core protein precursor occurs between aminoacids 176 and 188 but the exact cleavage site is not known. Some degraded forms of the core protein appear as well during the course of infection. The other proteins (p7, NS2, NS3, NS4A, NS4B, NS5A and NS5B) are cleaved by the viral proteases. Autoprocessing between NS2 and NS3 is mediated by the NS2 cysteine protease catalytic domain and regulated by the NS3 N-terminal domain. Post-translationally, phosphorylated by host PKC and PKA. In terms of processing, ubiquitinated; mediated by UBE3A and leading to core protein subsequent proteasomal degradation. Highly N-glycosylated. Post-translationally, palmitoylation is required for NS2/3 autoprocessing and E2 recruitment to membranes. In terms of processing, palmitoylated. This modification may play a role in its polymerization or in protein-protein interactions. Phosphorylated on serines in a basal form termed p56. p58 is a hyperphosphorylated form of p56. p56 and p58 coexist in the cell in roughly equivalent amounts. Hyperphosphorylation is dependent on the presence of NS4A. Host CSNK1A1/CKI-alpha or RPS6KB1 kinases may be responsible for NS5A phosphorylation. Post-translationally, tyrosine phosphorylation is essential for the interaction with host SRC. In terms of processing, the N-terminus is phosphorylated by host PRK2/PKN2.

It localises to the host endoplasmic reticulum membrane. The protein localises to the host mitochondrion membrane. The protein resides in the virion. Its subcellular location is the host cytoplasm. It is found in the host nucleus. It localises to the host lipid droplet. The protein localises to the virion membrane. The protein resides in the host mitochondrion. Its subcellular location is the host cell membrane. It is found in the host perinuclear region. It catalyses the reaction Hydrolysis of four peptide bonds in the viral precursor polyprotein, commonly with Asp or Glu in the P6 position, Cys or Thr in P1 and Ser or Ala in P1'.. The enzyme catalyses a ribonucleoside 5'-triphosphate + H2O = a ribonucleoside 5'-diphosphate + phosphate + H(+). The catalysed reaction is ATP + H2O = ADP + phosphate + H(+). It carries out the reaction RNA(n) + a ribonucleoside 5'-triphosphate = RNA(n+1) + diphosphate. Its activity is regulated as follows. Inhibited by the antiviral drug hexamethylene amiloride. Inhibition by amantadine appears to be genotype-dependent. Also inhibited by long-alkyl-chain iminosugar derivatives. With respect to regulation, activity is up-regulated by PRK2/PKN2-mediated phosphorylation. Functionally, packages viral RNA to form a viral nucleocapsid, and promotes virion budding. Participates in the viral particle production as a result of its interaction with the non-structural protein 5A. Binds RNA and may function as a RNA chaperone to induce the RNA structural rearrangements taking place during virus replication. Modulates viral translation initiation by interacting with viral IRES and 40S ribosomal subunit. Affects various cell signaling pathways, host immunity and lipid metabolism. Prevents the establishment of cellular antiviral state by blocking the interferon-alpha/beta (IFN-alpha/beta) and IFN-gamma signaling pathways and by blocking the formation of phosphorylated STAT1 and promoting ubiquitin-mediated proteasome-dependent degradation of STAT1. Activates STAT3 leading to cellular transformation. Regulates the activity of cellular genes, including c-myc and c-fos. May repress the promoter of p53, and sequester CREB3 and SP110 isoform 3/Sp110b in the cytoplasm. Represses cell cycle negative regulating factor CDKN1A, thereby interrupting an important check point of normal cell cycle regulation. Targets transcription factors involved in the regulation of inflammatory responses and in the immune response: suppresses TNF-induced NF-kappa-B activation, and activates AP-1. Binds to dendritic cells (DCs) via C1QR1, resulting in down-regulation of T-lymphocytes proliferation. Alters lipid metabolism by interacting with hepatocellular proteins involved in lipid accumulation and storage. Induces up-regulation of FAS promoter activity, and thereby contributes to the increased triglyceride accumulation in hepatocytes (steatosis). In terms of biological role, forms a heterodimer with envelope glycoprotein E2, which mediates virus attachment to the host cell, virion internalization through clathrin-dependent endocytosis and fusion with host membrane. Fusion with the host cell is most likely mediated by both E1 and E2, through conformational rearrangements of the heterodimer required for fusion rather than a classical class II fusion mechanism. E1/E2 heterodimer binds host apolipoproteins such as APOB and APOE thereby forming a lipo-viro-particle (LVP). APOE associated to the LVP allows the initial virus attachment to cell surface receptors such as the heparan sulfate proteoglycans (HSPGs), syndecan-1 (SDC1), syndecan-1 (SDC2), the low-density lipoprotein receptor (LDLR) and scavenger receptor class B type I (SCARB1). The cholesterol transfer activity of SCARB1 allows E2 exposure and binding of E2 to SCARB1 and the tetraspanin CD81. E1/E2 heterodimer binding on CD81 activates the epithelial growth factor receptor (EGFR) signaling pathway. Diffusion of the complex E1-E2-EGFR-SCARB1-CD81 to the cell lateral membrane allows further interaction with Claudin 1 (CLDN1) and occludin (OCLN) to finally trigger HCV entry. Its function is as follows. Forms a heterodimer with envelope glycoprotein E1, which mediates virus attachment to the host cell, virion internalization through clathrin-dependent endocytosis and fusion with host membrane. Fusion with the host cell is most likely mediated by both E1 and E2, through conformational rearrangements of the heterodimer required for fusion rather than a classical class II fusion mechanism. The interaction between envelope glycoprotein E2 and host apolipoprotein E/APOE allows the proper assembly, maturation and infectivity of the viral particles. This interaction is probably promoted via the up-regulation of cellular autophagy by the virus. E1/E2 heterodimer binds host apolipoproteins such as APOB and APOE thereby forming a lipo-viro-particle (LVP). APOE associated to the LVP allows the initial virus attachment to cell surface receptors such as the heparan sulfate proteoglycans (HSPGs), syndecan-1 (SDC1), syndecan-1 (SDC2), the low-density lipoprotein receptor (LDLR) and scavenger receptor class B type I (SCARB1). The cholesterol transfer activity of SCARB1 allows E2 exposure and binding of E2 to SCARB1 and the tetraspanin CD81. E1/E2 heterodimer binding on CD81 activates the epithelial growth factor receptor (EGFR) signaling pathway. Diffusion of the complex E1-E2-EGFR-SCARB1-CD81 to the cell lateral membrane allows further interaction with Claudin 1 (CLDN1) and occludin (OCLN) to finally trigger HCV entry. Inhibits host EIF2AK2/PKR activation, preventing the establishment of an antiviral state. Viral ligand for CD209/DC-SIGN and CLEC4M/DC-SIGNR, which are respectively found on dendritic cells (DCs), and on liver sinusoidal endothelial cells and macrophage-like cells of lymph node sinuses. These interactions allow the capture of circulating HCV particles by these cells and subsequent facilitated transmission to permissive cells such as hepatocytes and lymphocyte subpopulations. The interaction between E2 and host amino acid transporter complex formed by SLC3A2 and SLC7A5/LAT1 may facilitate viral entry into host cell. Ion channel protein that acts as a viroporin and plays an essential role in the assembly, envelopment and secretion of viral particles. Regulates the host cell secretory pathway, which induces the intracellular retention of viral glycoproteins and favors assembly of viral particles. Creates a pore in acidic organelles and releases Ca(2+) and H(+) in the cytoplasm of infected cells, leading to a productive viral infection. High levels of cytoplasmic Ca(2+) may trigger membrane trafficking and transport of viral ER-associated proteins to viroplasms, sites of viral genome replication. This ionic imbalance induces the assembly of the inflammasome complex, which triggers the maturation of pro-IL-1beta into IL-1beta through the action of caspase-1. Targets also host mitochondria and induces mitochondrial depolarization. In addition of its role as a viroporin, acts as a lipid raft adhesion factor. Functionally, cysteine protease required for the proteolytic auto-cleavage between the non-structural proteins NS2 and NS3. The N-terminus of NS3 is required for the function of NS2 protease (active region NS2-3). Promotes the initiation of viral particle assembly by mediating the interaction between structural and non-structural proteins. In terms of biological role, displays three enzymatic activities: serine protease with a chymotrypsin-like fold, NTPase and RNA helicase. NS3 serine protease, in association with NS4A, is responsible for the cleavages of NS3-NS4A, NS4A-NS4B, NS4B-NS5A and NS5A-NS5B. The NS3/NS4A complex prevents phosphorylation of host IRF3, thus preventing the establishment of dsRNA induced antiviral state. The NS3/NS4A complex induces host amino acid transporter component SLC3A2, thus contributing to HCV propagation. NS3 RNA helicase binds to RNA and unwinds both dsDNA and dsRNA in the 3' to 5' direction, and likely resolves RNA complicated stable secondary structures in the template strand. Binds a single ATP and catalyzes the unzipping of a single base pair of dsRNA. Inhibits host antiviral proteins TBK1 and IRF3 thereby preventing the establishment of an antiviral state. Cleaves host MAVS/CARDIF thereby preventing the establishment of an antiviral state. Cleaves host TICAM1/TRIF, thereby disrupting TLR3 signaling and preventing the establishment of an antiviral state. Its function is as follows. Induces a specific membrane alteration that serves as a scaffold for the virus replication complex. This membrane alteration gives rise to the so-called ER-derived membranous web that contains the replication complex. NS4B self-interaction contributes to its function in membranous web formation. Promotes host TRIF protein degradation in a CASP8-dependent manner thereby inhibiting host TLR3-mediated interferon signaling. Disrupts the interaction between STING and TBK1 contributing to the inhibition of interferon signaling. Phosphorylated protein that is indispensable for viral replication and assembly. Both hypo- and hyperphosphorylated states are required for the viral life cycle. The hyperphosphorylated form of NS5A is an inhibitor of viral replication. Involved in RNA-binding and especially in binding to the viral genome. Zinc is essential for RNA-binding. Participates in the viral particle production as a result of its interaction with the mature viral core protein. Its interaction with host VAPB may target the viral replication complex to vesicles. Down-regulates viral IRES translation initiation. Mediates interferon resistance, presumably by interacting with and inhibiting host EIF2AK2/PKR. Prevents BIN1-induced apoptosis. Acts as a transcriptional activator of some host genes important for viral replication when localized in the nucleus. Via the interaction with host PACSIN2, modulates lipid droplet formation in order to promote virion assembly. Modulates TNFRSF21/DR6 signaling pathway for viral propagation. Functionally, RNA-dependent RNA polymerase that performs primer-template recognition and RNA synthesis during viral replication. Initiates RNA transcription/replication at a flavin adenine dinucleotide (FAD), resulting in a 5'- FAD cap on viral RNAs. In this way, recognition of viral 5' RNA by host pattern recognition receptors can be bypassed, thereby evading activation of antiviral pathways. The polypeptide is Genome polyprotein (Homo sapiens (Human)).